Here is a 428-residue protein sequence, read N- to C-terminus: Beta-1,3-galactosyl-O-glycosyl-glycoprotein beta-1,6-N-acetylglucosaminyltransferase (428 aa).

Residues 1 to 9 (MLRNLFRRR) lie on the Cytoplasmic side of the membrane. A mediates interaction with GOLPH3 and is necessary and sufficient for localization to the Golgi region spans residues 5–9 (LFRRR). The helical; Signal-anchor for type II membrane protein transmembrane segment at 10–32 (LFSCPTKYYFMLLVLSLITFSVL) threads the bilayer. The interval 33 to 121 (RIHQKPEFFS…EPLTKEEVGF (89 aa)) is stem region. The Lumenal portion of the chain corresponds to 33 to 428 (RIHQKPEFFS…RHKALENLEH (396 aa)). 2 N-linked (GlcNAc...) asparagine glycosylation sites follow: Asn-58 and Asn-95. 4 disulfide bridges follow: Cys-59/Cys-413, Cys-100/Cys-172, Cys-151/Cys-199, and Cys-372/Cys-381. The interval 122-428 (PIAYSIVVHH…RHKALENLEH (307 aa)) is catalytic. UDP-N-acetyl-alpha-D-glucosamine is bound by residues 128-130 (VVH), 155-157 (DRK), and Tyr-187. 7 residues coordinate a glycoprotein: Glu-243, Asn-250, Lys-251, Arg-254, Glu-320, Lys-341, and Tyr-358. The active-site Nucleophile is the Glu-320. UDP-N-acetyl-alpha-D-glucosamine contacts are provided by Arg-378 and Lys-401.

It belongs to the glycosyltransferase 14 family. In terms of assembly, interacts with GOLPH3; may control GCNT1 retention in the Golgi. N-glycosylated. As to expression, expressed in kidney, liver, stomach, spleen, lung and brain.

It is found in the golgi apparatus membrane. The enzyme catalyses a 3-O-[beta-D-galactosyl-(1-&gt;3)-N-acetyl-alpha-D-galactosaminyl]-L-seryl-[protein] + UDP-N-acetyl-alpha-D-glucosamine = 3-O-{beta-D-galactosyl-(1-&gt;3)-[N-acetyl-beta-D-glucosaminyl-(1-&gt;6)]-N-acetyl-alpha-D-galactosaminyl}-L-seryl-[protein] + UDP + H(+). It catalyses the reaction a 3-O-[beta-D-galactosyl-(1-&gt;3)-N-acetyl-alpha-D-galactosaminyl]-L-threonyl-[protein] + UDP-N-acetyl-alpha-D-glucosamine = a 3-O-{beta-D-galactosyl-(1-&gt;3)-[N-acetyl-beta-D-glucosaminyl-(1-&gt;6)]-N-acetyl-alpha-D-galactosaminyl}-L-threonyl-[protein] + UDP + H(+). The catalysed reaction is a globoside GalGb4Cer + UDP-N-acetyl-alpha-D-glucosamine = a globoside GlcNAc-(beta1-&gt;6)-GalGb4Cer + UDP + H(+). It carries out the reaction a ganglioside GA1 + UDP-N-acetyl-alpha-D-glucosamine = a ganglioside beta-D-GlcNAc-(1-&gt;6)-GA1 + UDP + H(+). Its pathway is protein modification; protein glycosylation. It participates in glycolipid biosynthesis. With respect to regulation, inactivated by thiol-reactive agents. Inhibited by free UDP. Glycosyltransferase that catalyzes the transfer of an N-acetylglucosamine (GlcNAc) moiety in beta1-6 linkage from UDP-GlcNAc onto mucin-type core 1 O-glycan to form the branched mucin-type core 2 O-glycan. The catalysis is metal ion-independent and occurs with inversion of the anomeric configuration of sugar donor. Selectively involved in synthesis of mucin-type core 2 O-glycans that serve as scaffolds for the display of selectin ligand sialyl Lewis X epitope by myeloid cells, with an impact on homeostasis and recruitment to inflammatory sites. Can also act on glycolipid substrates. Transfers GlcNAc moiety to GalGb4Cer globosides in a reaction step to the synthesis of stage-specific embryonic antigen 1 (SSEA-1) determinant. Can use Galbeta1-3GalNAcalpha1-R and Galbeta1-3GalNAcbeta1-R oligosaccharide derivatives as acceptor substrates. This Mus musculus (Mouse) protein is Beta-1,3-galactosyl-O-glycosyl-glycoprotein beta-1,6-N-acetylglucosaminyltransferase (Gcnt1).